Reading from the N-terminus, the 146-residue chain is Large ribosomal subunit protein bL9 (146 aa).

The protein belongs to the bacterial ribosomal protein bL9 family.

Its function is as follows. Binds to the 23S rRNA. The protein is Large ribosomal subunit protein bL9 of Symbiobacterium thermophilum (strain DSM 24528 / JCM 14929 / IAM 14863 / T).